Here is a 305-residue protein sequence, read N- to C-terminus: Probable G-protein coupled receptor 141 (305 aa).

Residues 1–22 (MPGHNTSRNSSCDPIVTPHLIS) lie on the Extracellular side of the membrane. 2 N-linked (GlcNAc...) asparagine glycosylation sites follow: N5 and N9. Residues 23 to 43 (LYFIVLIGGLVGVISILFLLV) traverse the membrane as a helical segment. The Cytoplasmic segment spans residues 44 to 50 (KMNTRSV). Residues 51–71 (TTMAVINLVVVHSVFLLTVPF) form a helical membrane-spanning segment. At 72-89 (RLTYLIKKTWMFGLPFCK) the chain is on the extracellular side. A helical membrane pass occupies residues 90–110 (FVSAMLHIHMYLTFLFYVVIL). Topologically, residues 111–131 (VTRYLIFFKCKDKVEFYRKLH) are cytoplasmic. Residues 132-152 (AVAASAGMWTLVIVIVVPLVV) traverse the membrane as a helical segment. At 153–183 (SRYGIHEEYNEEHCFKFHKELAYTYVKIINY) the chain is on the extracellular side. Residues 184–204 (MIVIFVIAVAVILLVFQVFII) traverse the membrane as a helical segment. Topologically, residues 205-227 (MLMVQKLRHSLLSHQEFWAQLKN) are cytoplasmic. A helical transmembrane segment spans residues 228 to 248 (LFFIGVILVCFLPYQFFRIYY). The Extracellular portion of the chain corresponds to 249–267 (LNVVTHSNACNSKVAFYNE). Residues 268-288 (IFLSVTAISCYDLLLFVFGGS) form a helical membrane-spanning segment. Residues 289-305 (HWFKQKIIGLWNCVLCR) are Cytoplasmic-facing.

The protein belongs to the G-protein coupled receptor 1 family.

It is found in the cell membrane. Its function is as follows. Orphan receptor. The protein is Probable G-protein coupled receptor 141 (GPR141) of Homo sapiens (Human).